Reading from the N-terminus, the 118-residue chain is Large ribosomal subunit protein bL19 (118 aa).

The protein belongs to the bacterial ribosomal protein bL19 family.

Functionally, this protein is located at the 30S-50S ribosomal subunit interface and may play a role in the structure and function of the aminoacyl-tRNA binding site. The protein is Large ribosomal subunit protein bL19 of Campylobacter jejuni subsp. jejuni serotype O:2 (strain ATCC 700819 / NCTC 11168).